The sequence spans 498 residues: MKTIHFDMNKYETHVDLEYLKEHGRVEKISDGVIFCSGLENAALHQAVLIDERHRGVILELNEEFVGIGLIDKTNDILEGMHVGVSGKFIEVDLFEEMAGRVIDTTGKMLYEESEEKPTATSPLFCVTPAIMTIDSVTRPLNTGLAVIDSITPIGRGQRQLILGNRQSGKTQIAVDTIINQHDQNVHCIYVAIGLKAAYIAEVIETLRNHGAMEYSTVVATAASDSLTAQYLTPYAGMAVAEALRDQGKDVLIILDDLTKHADAYRAITLLFNRPPGREAYPGDSFYIHSSLLERAVQMNEEHGGGSITAIPMIETLSDDVTAYIPTNVISITDGQLFLKSDLFNRGQKPAVDVGVSVSRIGGDAQHPIIRKLSKNLTLILSQFEELKELLDFGNALDDGSMKMVSDGRLLTELFKQKILSPLSVTELIVILYAFQNGFLTKIPPANIQTFKDLLLEKAHMHKDFESFSAQIETINELNESHIEMLEEIIREAGRLFS.

Belongs to the ATPase alpha/beta chains family. As to quaternary structure, F-type ATPases have 2 components, CF(1) - the catalytic core - and CF(0) - the membrane proton channel. CF(1) has five subunits: alpha(3), beta(3), gamma(1), delta(1), epsilon(1). CF(0) has three main subunits: a(1), b(2) and c(9-12). The alpha and beta chains form an alternating ring which encloses part of the gamma chain. CF(1) is attached to CF(0) by a central stalk formed by the gamma and epsilon chains, while a peripheral stalk is formed by the delta and b chains.

The protein resides in the cell membrane. The catalysed reaction is ATP + H2O + 4 H(+)(in) = ADP + phosphate + 5 H(+)(out). In terms of biological role, produces ATP from ADP in the presence of a proton gradient across the membrane. The alpha chain is a regulatory subunit. The sequence is that of ATP synthase subunit alpha 1 from Listeria monocytogenes serotype 4b (strain F2365).